The following is a 322-amino-acid chain: MDAVQQQTNSTSNIDSAKCQKLKRFVIVGLLITIGILSWHFYEYFHSKPLPKTPDDVLTLSKNLYAEETEVSPYLYKVNLQGKTTSGAHDDRAPRNLFELHQDLLARDANSTTALLMRLFDNYELDVAVQEHPTPEHVQEQYDFLRAVMGTRVMKLTMRFLVHKDIVSVEYDDQLRLLQELWFTPYSRGRGIVGSSSFEHVFMAEIRDQKVLGLHNWLYFADQEQRGNVDYKGWLNHKEMGKHNQMVLSVRYTFHNINKPVNGFFVGISPELDMALYTACFLATAKEEPCHIQLGHASATIVSHEWKWNGMRLIGTVYPDSS.

A helical membrane pass occupies residues 25–45 (FVIVGLLITIGILSWHFYEYF). Positions 53–322 (TPDDVLTLSK…LIGTVYPDSS (270 aa)) constitute an EndoU domain. Catalysis depends on residues histidine 200, histidine 215, and lysine 259.

The protein belongs to the ENDOU family. Monomer. Mn(2+) serves as cofactor. Predominantly expressed in head.

The protein localises to the membrane. It catalyses the reaction a ribonucleotidyl-ribonucleotide-RNA = a 3'-end 2',3'-cyclophospho-ribonucleotide-RNA + a 5'-end dephospho-ribonucleoside-RNA. In terms of biological role, endoribonuclease that cleaves single-stranded RNAs at uridylates and releases products that have 2'-3'-cyclic phosphate termini. Preferentially cleaves single stranded RNA at poly-U sites with CU, UC and AU sites cleaved less efficiently. May target mRNAs encoding proteins involved in lipid metabolism to regulate their expression. Regulates levels of TBPH protein, but not mRNA, by an as yet unknown mechanism. Important for neuronal development or function. The polypeptide is Uridylate-specific endoribonuclease EndoU (Drosophila melanogaster (Fruit fly)).